A 459-amino-acid polypeptide reads, in one-letter code: Ammonium transporter Rh type B (459 aa).

The Cytoplasmic portion of the chain corresponds to 1-10 (MAESTNLRLR). Residues 11–31 (LPLICIILEVILIILFGVLVE) form a helical membrane-spanning segment. At 32–58 (YNDDTDAKKWNKNNSTDPATNEFYYRY) the chain is on the extracellular side. N-linked (GlcNAc...) asparagine glycosylation occurs at N45. The chain crosses the membrane as a helical span at residues 59–79 (PSFQDVHVMIFVGFGFLMTFL). Residues 80–87 (QRYGFSSM) are Cytoplasmic-facing. The chain crosses the membrane as a helical span at residues 88 to 108 (GFNFLIAAFSLQWATLMQGFF). Residues 109-121 (HGMHHGKIHVGVT) lie on the Extracellular side of the membrane. The helical transmembrane segment at 122–142 (SMINADFCTGAVLISFGAVLG) threads the bilayer. The Cytoplasmic segment spans residues 143 to 149 (KTSPVQL). The chain crosses the membrane as a helical span at residues 150–170 (LVMAILEVTLFAVNEYILLSI). Over 171–176 (LGANDA) the chain is Extracellular. A helical membrane pass occupies residues 177 to 197 (GGSMTIHTFGAYFGLMVTRIL). Residues 198–216 (HRPNLDKSKHKNSSVYHSD) lie on the Cytoplasmic side of the membrane. The chain crosses the membrane as a helical span at residues 217 to 237 (LFAMIGTIFLWMFWPSFNSAI). The Extracellular portion of the chain corresponds to 238–248 (TQYGDPQHRTA). Residues 249–269 (ANTYYSLAACTLATFGFSSLV) form a helical membrane-spanning segment. Over 270 to 274 (NPEGK) the chain is Cytoplasmic. A helical membrane pass occupies residues 275–295 (LDMVHIQNAALAGGVAVGTAG). Residue E296 is a topological domain, extracellular. The helical transmembrane segment at 297–317 (MMLTPFGSMIVGFLAGTISVL) threads the bilayer. Residues 318–340 (GYKYLTPFMESKLKIQDTCGIHN) are Cytoplasmic-facing. A helical membrane pass occupies residues 341–361 (LHGMPGILGAIVGAVTAALAS). Residues 362 to 392 (RDVYGNGLDKVFLEAADNSQWSAQTKGGFQA) are Extracellular-facing. The helical transmembrane segment at 393–413 (ISLAVTLGIALIGGLITGFLL) threads the bilayer. Over 414 to 459 (KLPIYGTPPDTQCFEDAVYWEVPGEEEDHHELNEVSTQNEVEKLNS) the chain is Cytoplasmic. Residues 440 to 459 (EDHHELNEVSTQNEVEKLNS) are disordered.

This sequence belongs to the ammonium transporter (TC 2.A.49) family. Rh subfamily.

The protein resides in the basolateral cell membrane. It localises to the cytoplasmic vesicle membrane. Its function is as follows. Functions as an ammonia transporter. May play a role in the elimination of ammonia in the gill. This chain is Ammonium transporter Rh type B (rhbg), found in Danio rerio (Zebrafish).